The sequence spans 476 residues: Sulfate adenylyltransferase subunit 1 (476 aa).

A tr-type G domain is found at 24-239; that stretch reads KSLLRFLTCG…LLETVDVDYE (216 aa). A G1 region spans residues 33–40; it reads GSVDDGKS. GTP is bound at residue 33–40; the sequence is GSVDDGKS. Residues 91 to 95 are G2; that stretch reads GITID. Residues 112–115 form a G3 region; that stretch reads DTPG. Residues 112–116 and 167–170 contribute to the GTP site; these read DTPGH and NKMD. Positions 167–170 are G4; that stretch reads NKMD. Residues 205–207 are G5; sequence SAL.

This sequence belongs to the TRAFAC class translation factor GTPase superfamily. Classic translation factor GTPase family. CysN/NodQ subfamily. Heterodimer composed of CysD, the smaller subunit, and CysN.

It catalyses the reaction sulfate + ATP + H(+) = adenosine 5'-phosphosulfate + diphosphate. It functions in the pathway sulfur metabolism; hydrogen sulfide biosynthesis; sulfite from sulfate: step 1/3. Its function is as follows. With CysD forms the ATP sulfurylase (ATPS) that catalyzes the adenylation of sulfate producing adenosine 5'-phosphosulfate (APS) and diphosphate, the first enzymatic step in sulfur assimilation pathway. APS synthesis involves the formation of a high-energy phosphoric-sulfuric acid anhydride bond driven by GTP hydrolysis by CysN coupled to ATP hydrolysis by CysD. This Vibrio parahaemolyticus serotype O3:K6 (strain RIMD 2210633) protein is Sulfate adenylyltransferase subunit 1.